Consider the following 261-residue polypeptide: Gap junction beta-6 protein (261 aa).

Residues 1–22 are Cytoplasmic-facing; sequence MDWGTLHTFVGGVNKHSTSIGK. The chain crosses the membrane as a helical span at residues 23–45; the sequence is VWVTVLFVFRVMILVVAAQEVWG. The Extracellular segment spans residues 46 to 75; the sequence is DEQEDFVCNTLQPGCRNVCYDHFFPVSHIR. A helical membrane pass occupies residues 76–98; that stretch reads LWALQLIFVSTPALLVAMHVAYY. Residues 99–131 are Cytoplasmic-facing; the sequence is RHEAARRFRRGETRSEFKDLEDIKRQKVRIEGS. A helical transmembrane segment spans residues 132 to 154; that stretch reads LWWTYTSSIFFRIVFEAAFMYVF. The Extracellular portion of the chain corresponds to 155-192; the sequence is YFLYNGYHLPWVLKCGIQPCPNLVDCFISRPTEKTVFT. Residues 193–215 form a helical membrane-spanning segment; that stretch reads IFMISASVICMLLNVAELCYLLL. The Cytoplasmic segment spans residues 216–261; the sequence is KVCFRRSKRAQTQKAPPNHALKESKQNEMNELISEGGQNAITGFPS.

This sequence belongs to the connexin family. Beta-type (group I) subfamily. In terms of assembly, a connexon is composed of a hexamer of connexins. Interacts with CNST.

It is found in the cell membrane. Its subcellular location is the cell junction. The protein localises to the gap junction. One gap junction consists of a cluster of closely packed pairs of transmembrane channels, the connexons, through which materials of low MW diffuse from one cell to a neighboring cell. The polypeptide is Gap junction beta-6 protein (GJB6) (Bos taurus (Bovine)).